Consider the following 677-residue polypeptide: uncharacterized protein (677 aa).

A disordered region spans residues 1-87 (MGRHSKPDPE…PTGAEPIAAA (87 aa)). Positions 17-29 (SDGHAAEQQHWED) are enriched in basic and acidic residues. A compositionally biased stretch (low complexity) spans 51-64 (GHYSAVGGYSASGS). 4 consecutive transmembrane segments (helical) span residues 115-135 (VSIG…GVIL), 192-212 (VAVA…IGKW), 313-333 (EAVA…IGAV), and 474-494 (ATLA…IMLD).

Its subcellular location is the cell membrane. This is an uncharacterized protein from Mycobacterium tuberculosis (strain CDC 1551 / Oshkosh).